Here is a 291-residue protein sequence, read N- to C-terminus: MATLASSTKPQKWVSLIAGGVAGGVEAASTYPFEYAKTRVQLLRTSKSTPSNPLRLIFTVAQQEGVGALYTGCSTLIIGTTAKAAVRFVSYDTIKNSLSDERGSLSPARGIVAGVVAGATESVLAVTPTERIKTALIDDAKNARQFRSSLHATQVLVRTHGLRELYRGLVSTTLKQSATSAVRMGTYNILKESFKAHDIPPTLFTTFCMGALAGVVTVYATQPFDTIKTRAQGVQGAGLVEAIRNIQSDYGVRGFWKGSSMRLGRLLLSGGIVFSVYEKMTYLLHSRAGVE.

Solcar repeat units lie at residues 10 to 97 (PQKW…IKNS), 105 to 193 (LSPA…LKES), and 201 to 283 (PTLF…MTYL). The next 6 membrane-spanning stretches (helical) occupy residues 16 to 36 (LIAGGVAGGVEAASTYPFEYA), 74 to 94 (STLIIGTTAKAAVRFVSYDTI), 112 to 132 (VAGVVAGATESVLAVTPTERI), 172 to 192 (TTLKQSATSAVRMGTYNILKE), 203 to 220 (LFTTFCMGALAGVVTVYA), and 255 to 276 (FWKGSSMRLGRLLLSGGIVFSV).

This sequence belongs to the mitochondrial carrier (TC 2.A.29) family.

It is found in the mitochondrion inner membrane. It carries out the reaction citrate(in) + H(+)(in) = citrate(out) + H(+)(out). Functionally, mitochondrial transporter that mediates citrate export from mitochondria to cytoplasm. Both ctpA, ctpB, and ctpD play important roles in citric acid transport across the mitochondrial membrane and function in a redundant manner. This Aspergillus niger (strain ATCC 1015 / CBS 113.46 / FGSC A1144 / LSHB Ac4 / NCTC 3858a / NRRL 328 / USDA 3528.7) protein is Mitochondrial citrate transporter B.